Reading from the N-terminus, the 324-residue chain is Zinc transporter ZIP1 (324 aa).

Over 1–30 the chain is Extracellular; that stretch reads MGPWGEPELLVWRPEAVASEPPVPVGLEVK. Residues 31–51 traverse the membrane as a helical segment; the sequence is LGALVLLLVLTLLCSLVPICV. Topologically, residues 52-68 are cytoplasmic; the sequence is LRRPGANHEGSASRQKA. A helical membrane pass occupies residues 69–89; that stretch reads LSLVSCFAGGVFLATCLLDLL. The Extracellular portion of the chain corresponds to 90-104; sequence PDYLAAIDEALAALH. Residues 105-125 form a helical membrane-spanning segment; the sequence is VTLQFPLQEFILAMGFFLVLV. At 126–179 the chain is on the cytoplasmic side; that stretch reads MEQITLAYKEQSGPSPLEETRALLGTVNGGPQHWHDGPGVPQASGAPATPSALR. The helical transmembrane segment at 180 to 200 threads the bilayer; it reads ACVLVFSLALHSVFEGLAVGL. The Extracellular segment spans residues 201–206; it reads QRDRAR. Residues 207-227 traverse the membrane as a helical segment; the sequence is AMELCLALLLHKGILAVSLSL. The Cytoplasmic portion of the chain corresponds to 228–237; sequence RLLQSHLRAQ. The helical transmembrane segment at 238 to 258 threads the bilayer; it reads VVAGCGILFSCMTPLGIGLGA. Residues 259–272 are Extracellular-facing; it reads ALAESAGPLHQLAQ. A helical transmembrane segment spans residues 273–293; it reads SVLEGMAAGTFLYITFLEILP. The Cytoplasmic segment spans residues 294–303; it reads QELASSEQRI. The helical transmembrane segment at 304-324 threads the bilayer; it reads LKVILLLAGFALLTGLLFIQI.

It belongs to the ZIP transporter (TC 2.A.5) family. In terms of tissue distribution, ubiquitous. Expressed in most adult and fetal tissues including the epidermis.

Its subcellular location is the cell membrane. It is found in the endoplasmic reticulum membrane. It carries out the reaction Zn(2+)(in) = Zn(2+)(out). Inhibited by Ni(2+) ions. Fe(2+) ions do not inhibit zinc uptake. Transporter for the divalent cation Zn(2+). Mediates the influx of Zn(2+) into cells from extracellular space. Functions as the major importer of zinc from circulating blood plasma into prostate cells. The polypeptide is Zinc transporter ZIP1 (Homo sapiens (Human)).